A 595-amino-acid chain; its full sequence is Inactive metallocarboxypeptidase ecm14 (595 aa).

A signal peptide spans 1-22; that stretch reads MYRPDHVFVILCAVFFTGQVTA. The propeptide occupies 23–178; that stretch reads VPAGTGITHP…MIYESQYPSR (156 aa). The region spanning 206–527 is the Peptidase M14 domain; it reads NYQPFPVILQ…NSVLVLGHFL (322 aa). Residues His270 and Glu273 each coordinate Zn(2+). Residues 270–273, Arg328, and 345–346 each bind substrate; these read HARE and DR. An intrachain disulfide couples Cys339 to Cys362. Asn386 carries an N-linked (GlcNAc...) asparagine glycan. Residue His402 coordinates Zn(2+). Position 403-404 (403-404) interacts with substrate; the sequence is SY.

It belongs to the peptidase M14 family. Requires Zn(2+) as cofactor.

Its subcellular location is the vacuole. The protein resides in the secreted. In terms of biological role, inactive carboxypeptidase that may play a role in cell wall organization and biogenesis. The chain is Inactive metallocarboxypeptidase ecm14 (ecm14) from Talaromyces marneffei (strain ATCC 18224 / CBS 334.59 / QM 7333) (Penicillium marneffei).